Consider the following 158-residue polypeptide: Glutathione peroxidase homolog BsaA (158 aa).

Residue Cys36 is part of the active site.

This sequence belongs to the glutathione peroxidase family.

This chain is Glutathione peroxidase homolog BsaA (bsaA), found in Staphylococcus aureus (strain COL).